A 208-amino-acid polypeptide reads, in one-letter code: MKNFLQQINSYIKEAFNAGKYLYNGLSVTFDHLRRRPVTVQYPYEKLIPSERYRGRIHYEFDKCIACEVCVRVCPINLPVVDWVMNKETKKKELRNYSIDFGVCIFCGNCVEYCPTNCLSMTEEYELATFDRHNLNFDNVALGRLPTNVTTDPSIKPLRELAYLPKGVMDPHEIPASDIRVGKLPEEVYDWMRPTSNENKDKISNSNN.

2 consecutive 4Fe-4S ferredoxin-type domains span residues 55–84 (GRIH…VDWV) and 95–124 (RNYS…MTEE). C64, C67, C70, C74, C104, C107, C110, and C114 together coordinate [4Fe-4S] cluster.

This sequence belongs to the complex I 23 kDa subunit family. In terms of assembly, NDH-1 is composed of at least 11 different subunits. The cofactor is [4Fe-4S] cluster.

It is found in the cellular thylakoid membrane. It catalyses the reaction a plastoquinone + NADH + (n+1) H(+)(in) = a plastoquinol + NAD(+) + n H(+)(out). The catalysed reaction is a plastoquinone + NADPH + (n+1) H(+)(in) = a plastoquinol + NADP(+) + n H(+)(out). NDH-1 shuttles electrons from an unknown electron donor, via FMN and iron-sulfur (Fe-S) centers, to quinones in the respiratory and/or the photosynthetic chain. The immediate electron acceptor for the enzyme in this species is believed to be plastoquinone. Couples the redox reaction to proton translocation, and thus conserves the redox energy in a proton gradient. The polypeptide is NAD(P)H-quinone oxidoreductase subunit I (Prochlorococcus marinus (strain MIT 9312)).